Reading from the N-terminus, the 818-residue chain is Glycerol-3-phosphate acyltransferase (818 aa).

Residues 305–310 (HRSHMD) carry the HXXXXD motif motif.

The protein belongs to the GPAT/DAPAT family.

Its subcellular location is the cell inner membrane. It catalyses the reaction sn-glycerol 3-phosphate + an acyl-CoA = a 1-acyl-sn-glycero-3-phosphate + CoA. Its pathway is phospholipid metabolism; CDP-diacylglycerol biosynthesis; CDP-diacylglycerol from sn-glycerol 3-phosphate: step 1/3. This chain is Glycerol-3-phosphate acyltransferase, found in Photorhabdus laumondii subsp. laumondii (strain DSM 15139 / CIP 105565 / TT01) (Photorhabdus luminescens subsp. laumondii).